The primary structure comprises 350 residues: Serine-threonine kinase receptor-associated protein (350 aa).

WD repeat units lie at residues 12–56 (GHTR…GTFL), 57–96 (GHKG…ELIT), 98–137 (AHKH…AEPD), 141–179 (GHTS…EVKA), 180–212 (LNVA…HSAE), 221–262 (EAPA…ESYK), and 263–302 (GHFG…TYGL). The segment at 311–350 (ENAEAAKARTTLPGTAEEEIEEVASENSDSVYSSTPEVKA) is disordered. Residues 335 to 350 (SENSDSVYSSTPEVKA) show a composition bias toward polar residues.

Belongs to the WD repeat STRAP family. As to quaternary structure, part of the core SMN complex.

It localises to the cytoplasm. The protein resides in the nucleus. Its function is as follows. The SMN complex catalyzes the assembly of small nuclear ribonucleoproteins (snRNPs), the building blocks of the spliceosome, and thereby plays an important role in the splicing of cellular pre-mRNAs. Most spliceosomal snRNPs contain a common set of Sm proteins SNRPB, SNRPD1, SNRPD2, SNRPD3, SNRPE, SNRPF and SNRPG that assemble in a heptameric protein ring on the Sm site of the small nuclear RNA to form the core snRNP (Sm core). In the cytosol, the Sm proteins SNRPD1, SNRPD2, SNRPE, SNRPF and SNRPG are trapped in an inactive 6S pICln-Sm complex by the chaperone CLNS1A that controls the assembly of the core snRNP. To assemble core snRNPs, the SMN complex accepts the trapped 5Sm proteins from CLNS1A forming an intermediate. Binding of snRNA inside 5Sm triggers eviction of the SMN complex, thereby allowing binding of SNRPD3 and SNRPB to complete assembly of the core snRNP. STRAP plays a role in the cellular distribution of the SMN complex. The chain is Serine-threonine kinase receptor-associated protein (STRAP) from Gallus gallus (Chicken).